A 137-amino-acid chain; its full sequence is Small ribosomal subunit protein uS12 (137 aa).

The interval 1 to 55 is disordered; it reads MPTINQLVRKPRQSKIKKSDSPALNKGFNSKKKKFTDLNSPQKRGVCTRVGTMTP. Asp102 carries the 3-methylthioaspartic acid modification. Residues 118–137 form a disordered region; it reads SGVDGRRQGRSLYGTKKPKN.

The protein belongs to the universal ribosomal protein uS12 family. Part of the 30S ribosomal subunit. Contacts proteins S8 and S17. May interact with IF1 in the 30S initiation complex.

In terms of biological role, with S4 and S5 plays an important role in translational accuracy. Its function is as follows. Interacts with and stabilizes bases of the 16S rRNA that are involved in tRNA selection in the A site and with the mRNA backbone. Located at the interface of the 30S and 50S subunits, it traverses the body of the 30S subunit contacting proteins on the other side and probably holding the rRNA structure together. The combined cluster of proteins S8, S12 and S17 appears to hold together the shoulder and platform of the 30S subunit. The sequence is that of Small ribosomal subunit protein uS12 from Staphylococcus aureus (strain Mu3 / ATCC 700698).